The chain runs to 508 residues: Tyrosine decarboxylase 4 (508 aa).

The residue at position 318 (K318) is an N6-(pyridoxal phosphate)lysine.

This sequence belongs to the group II decarboxylase family. Homodimer. It depends on pyridoxal 5'-phosphate as a cofactor.

The catalysed reaction is L-tyrosine + H(+) = tyramine + CO2. This is Tyrosine decarboxylase 4 (TYRDC-4) from Petroselinum crispum (Parsley).